A 787-amino-acid polypeptide reads, in one-letter code: Penicillin-binding protein 1A (787 aa).

Residues 1–6 (MYKSLF) lie on the Cytoplasmic side of the membrane. A helical; Signal-anchor for type II membrane protein membrane pass occupies residues 7-27 (LCLKIFAVLILIGCSVTAYII). Residues 28–787 (YHYSHDLPDY…GMLDQSQEIY (760 aa)) are Periplasmic-facing. Residues 49–220 (TRIYSRDGKL…SELNPDKNYS (172 aa)) form a transglycosylase region. Glu87 functions as the Proton donor; for transglycosylase activity in the catalytic mechanism. Residues 398–711 (DVIVVEPIKD…SNVVLPIFID (314 aa)) are transpeptidase. The active-site Acyl-ester intermediate; for transpeptidase activity is Ser457.

It in the N-terminal section; belongs to the glycosyltransferase 51 family. In the C-terminal section; belongs to the transpeptidase family.

The protein resides in the cell inner membrane. It catalyses the reaction [GlcNAc-(1-&gt;4)-Mur2Ac(oyl-L-Ala-gamma-D-Glu-L-Lys-D-Ala-D-Ala)](n)-di-trans,octa-cis-undecaprenyl diphosphate + beta-D-GlcNAc-(1-&gt;4)-Mur2Ac(oyl-L-Ala-gamma-D-Glu-L-Lys-D-Ala-D-Ala)-di-trans,octa-cis-undecaprenyl diphosphate = [GlcNAc-(1-&gt;4)-Mur2Ac(oyl-L-Ala-gamma-D-Glu-L-Lys-D-Ala-D-Ala)](n+1)-di-trans,octa-cis-undecaprenyl diphosphate + di-trans,octa-cis-undecaprenyl diphosphate + H(+). The catalysed reaction is Preferential cleavage: (Ac)2-L-Lys-D-Ala-|-D-Ala. Also transpeptidation of peptidyl-alanyl moieties that are N-acyl substituents of D-alanine.. It functions in the pathway cell wall biogenesis; peptidoglycan biosynthesis. In terms of biological role, cell wall formation. Synthesis of cross-linked peptidoglycan from the lipid intermediates. The enzyme has a penicillin-insensitive transglycosylase N-terminal domain (formation of linear glycan strands) and a penicillin-sensitive transpeptidase C-terminal domain (cross-linking of the peptide subunits). In Rickettsia prowazekii (strain Madrid E), this protein is Penicillin-binding protein 1A (mrcA).